A 278-amino-acid polypeptide reads, in one-letter code: Maltodextrin transport system permease protein MdxG (278 aa).

Transmembrane regions (helical) follow at residues isoleucine 12–threonine 32, threonine 74–tyrosine 94, leucine 108–valine 128, methionine 131–isoleucine 151, isoleucine 183–alanine 203, and valine 242–phenylalanine 262. An ABC transmembrane type-1 domain is found at tyrosine 71–leucine 263.

It belongs to the binding-protein-dependent transport system permease family. MalFG subfamily. In terms of assembly, the complex is composed of two ATP-binding proteins (MsmX), two transmembrane proteins (MdxF and MdxG) and a solute-binding protein (MdxE).

It localises to the cell membrane. Part of the ABC transporter complex involved in maltodextrin import. Probably responsible for the translocation of the substrate across the membrane. In Bacillus subtilis (strain 168), this protein is Maltodextrin transport system permease protein MdxG (mdxG).